The sequence spans 289 residues: MASGKEIKTKIASVQSTQKITKAMEMVATSKMRKTQDRMAASRPYSETIRNVISHVSKASIGYKHPFLVEREVKKVGMLVISTDRGMCGGLNINLFKTVLNEIKKWKEQGITVEVGVIGSKGIAFFRSLGLKIRAQHSGMGDNPSVEELLGIANDMFDAYKDGKIDALYLAHNQFINTMSQKPSFAQLVPLPELDTDNLGERQQAWDYIYEPDPKMLLDSLLTRYLESQVYQSVVDNLASEQAARMVAMKAATDNAGNLINDLQLVYNKARQASITNELNEIVAGAAAI.

This sequence belongs to the ATPase gamma chain family. As to quaternary structure, F-type ATPases have 2 components, CF(1) - the catalytic core - and CF(0) - the membrane proton channel. CF(1) has five subunits: alpha(3), beta(3), gamma(1), delta(1), epsilon(1). CF(0) has three main subunits: a, b and c.

It localises to the cell inner membrane. Functionally, produces ATP from ADP in the presence of a proton gradient across the membrane. The gamma chain is believed to be important in regulating ATPase activity and the flow of protons through the CF(0) complex. The chain is ATP synthase gamma chain from Mannheimia succiniciproducens (strain KCTC 0769BP / MBEL55E).